Here is a 476-residue protein sequence, read N- to C-terminus: Sulfate adenylyltransferase subunit 1 (476 aa).

In terms of domain architecture, tr-type G spans 24–238; sequence KSLLRFLTCG…ELLEYVDIDR (215 aa). The G1 stretch occupies residues 33-40; sequence GSVDDGKS. 33-40 contacts GTP; that stretch reads GSVDDGKS. The G2 stretch occupies residues 91–95; it reads GITID. Positions 112 to 115 are G3; it reads DTPG. GTP contacts are provided by residues 112–116 and 167–170; these read DTPGH and NKMD. Residues 167–170 form a G4 region; that stretch reads NKMD. Residues 205–207 are G5; it reads SAL.

The protein belongs to the TRAFAC class translation factor GTPase superfamily. Classic translation factor GTPase family. CysN/NodQ subfamily. Heterodimer composed of CysD, the smaller subunit, and CysN.

It carries out the reaction sulfate + ATP + H(+) = adenosine 5'-phosphosulfate + diphosphate. Its pathway is sulfur metabolism; hydrogen sulfide biosynthesis; sulfite from sulfate: step 1/3. Its function is as follows. With CysD forms the ATP sulfurylase (ATPS) that catalyzes the adenylation of sulfate producing adenosine 5'-phosphosulfate (APS) and diphosphate, the first enzymatic step in sulfur assimilation pathway. APS synthesis involves the formation of a high-energy phosphoric-sulfuric acid anhydride bond driven by GTP hydrolysis by CysN coupled to ATP hydrolysis by CysD. The sequence is that of Sulfate adenylyltransferase subunit 1 from Vibrio cholerae serotype O1 (strain M66-2).